The following is an 82-amino-acid chain: Transcription elongation factor 1 homolog (82 aa).

Positions 26, 29, 50, and 53 each coordinate Zn(2+).

The protein belongs to the ELOF1 family.

The protein localises to the nucleus. Transcription elongation factor implicated in the maintenance of proper chromatin structure in actively transcribed regions. The protein is Transcription elongation factor 1 homolog of Manduca sexta (Tobacco hawkmoth).